The chain runs to 694 residues: MATPLKLYRNIGIAAHVDAGKTTTTERVLYYTGMSHKIGEVHDGAATMDWMVQEQERGITITSAATTCYWSGMDKQFESHRINIIDTPGHVDFMIEVERSLRVLDGAVVVFDSVAGVEPQSETVWRQANKYGVPRIVFVNKMDRMGANFLRVVSQIKQRLGSTPVVLQLPIGAEEEFKGVIDLIKMKAIHWDEENKGMTFKYVDIPADLKATCEEYRAHIIEAAAEYSEELMEKYLEGEEFTEAEIKKALRHLTITNKVVPVFCGSAFKNKGVQAVLDGVIEYLPSPTDIPDIQGVDEHGDEIHRKTSYDEPFSALAFKIATDPFVGTLTYFRAYSGILKSGDTVYNSVKGKKERIGRLLQMHANSREEIKEVRAGDIAAAVGLKTVTTGDTLCDQDKVVILERMDFPDPVIAVAVEPKTKADQEKMGIALGKLAQEDPSFRVHTDEESGQTIIQGMGELHLEIIVDRMKREFNVEANVGKPQVAYRETLKQAVEQEGKFVRQSGGRGQYGHVWLKIEPQEPGKGYEFINAIVGGVIPKEYIPAVDKGIQEQMQNGVIAGYPVVDVKVTLFDGSFHEVDSSEMAFKIAGSQCFKQGALKAKPVLLEPIMSVEVVTPEDYMGDVMGDLNRRRGLVQGMEDSPAGKIVRAEVPLAEMFGYSTDLRSATQGRATYTMEFCKYAEAPTNIAEAIIKKQ.

The tr-type G domain maps to 6–288 (KLYRNIGIAA…GVIEYLPSPT (283 aa)). GTP is bound by residues 15–22 (AHVDAGKT), 86–90 (DTPGH), and 140–143 (NKMD).

Belongs to the TRAFAC class translation factor GTPase superfamily. Classic translation factor GTPase family. EF-G/EF-2 subfamily.

It is found in the cytoplasm. In terms of biological role, catalyzes the GTP-dependent ribosomal translocation step during translation elongation. During this step, the ribosome changes from the pre-translocational (PRE) to the post-translocational (POST) state as the newly formed A-site-bound peptidyl-tRNA and P-site-bound deacylated tRNA move to the P and E sites, respectively. Catalyzes the coordinated movement of the two tRNA molecules, the mRNA and conformational changes in the ribosome. This Legionella pneumophila (strain Paris) protein is Elongation factor G.